Here is a 240-residue protein sequence, read N- to C-terminus: MAGHSKWKNIQKRKNAQDAKRGKIFMKLAKEIYVAAKEGGADPEANSALRLVIEKAKGANMPNENIDRAIKKAAGGQDGSSYEEITYEGYGPSGIAVMVECVTDNKNRTASNVRTAFNKNGGSLGESGCVAFLFERKGFITIDRTERQIEEDELMLDVLEAGGEELRIEEDLYEVFTEPEHFEEVKTALESKYLISSAEVTMLPNTYAEADDQAVEKLETLIDVLEDDDDVQEVYTNYRS.

Belongs to the TACO1 family.

It is found in the cytoplasm. This is Probable transcriptional regulatory protein YrbC (yrbC) from Bacillus subtilis (strain 168).